The primary structure comprises 412 residues: COP9 signalosome complex subunit 4 (412 aa).

The PCI domain maps to 216–378; it reads EAAQRYYELS…GILHFEDSNP (163 aa).

The protein belongs to the CSN4 family. As to quaternary structure, component of the CSN complex, probably composed of csn-1, csn-2, csn-3, csn-4, csn-5, csn-6 and csn-7. Within the complex it probably interacts directly with csn-2 and csn-4. In the complex, it probably interacts directly with csn-1, csn-2, csn-3 and csn-6. Interacts with itself.

Its subcellular location is the cytoplasm. The protein localises to the nucleus. Its function is as follows. Component of the COP9 signalosome complex (CSN), a complex involved in various cellular and developmental processes. The CSN complex is an essential regulator of the ubiquitin (Ubl) conjugation pathway by mediating the deneddylation of the cullin subunits of the SCF-type E3 ligase complexes, leading to decrease the Ubl ligase activity of SCF. The CSN complex plays an essential role in embryogenesis and oogenesis and is required to regulate microtubule stability in the early embryo. Mediates mei-3/katanin targeting for degradation at the meiosis to mitosis transition via deneddylation of cul-3. This chain is COP9 signalosome complex subunit 4 (csn-4), found in Caenorhabditis elegans.